The following is a 144-amino-acid chain: Globin-1 (144 aa).

The region spanning 1–141 is the Globin domain; sequence VSANDIKNVQ…ILHQMSSYFA (141 aa). His89 contacts heme b.

Belongs to the globin family. In terms of assembly, homodimer.

The chain is Globin-1 from Phreagena soyoae (Deep-sea cold-seep clam).